The following is a 137-amino-acid chain: Putative pre-16S rRNA nuclease (137 aa).

Belongs to the YqgF nuclease family.

It is found in the cytoplasm. Could be a nuclease involved in processing of the 5'-end of pre-16S rRNA. The polypeptide is Putative pre-16S rRNA nuclease (Chromobacterium violaceum (strain ATCC 12472 / DSM 30191 / JCM 1249 / CCUG 213 / NBRC 12614 / NCIMB 9131 / NCTC 9757 / MK)).